The sequence spans 500 residues: Trehalose-6-phosphate synthase (500 aa).

Position 28 (R28) interacts with D-glucose 6-phosphate. Residue G48–G49 participates in UDP-alpha-D-glucose binding. Residues Y108 and D162 each coordinate D-glucose 6-phosphate. UDP-alpha-D-glucose contacts are provided by R304 and K309. R342 contacts D-glucose 6-phosphate. L407–E411 provides a ligand contact to UDP-alpha-D-glucose.

Belongs to the glycosyltransferase 20 family. In terms of assembly, homotetramer.

It catalyses the reaction ADP-alpha-D-glucose + D-glucose 6-phosphate = alpha,alpha-trehalose 6-phosphate + ADP + H(+). The catalysed reaction is CDP-alpha-D-glucose + D-glucose 6-phosphate = alpha,alpha-trehalose 6-phosphate + CDP + H(+). The enzyme catalyses GDP-alpha-D-glucose + D-glucose 6-phosphate = alpha,alpha-trehalose 6-phosphate + GDP + H(+). It carries out the reaction TDP-alpha-D-glucose + D-glucose 6-phosphate = 5-methyl-UDP + alpha,alpha-trehalose 6-phosphate + H(+). It catalyses the reaction D-glucose 6-phosphate + UDP-alpha-D-glucose = alpha,alpha-trehalose 6-phosphate + UDP + H(+). It participates in glycan biosynthesis; trehalose biosynthesis. Probably involved in the osmoprotection via the biosynthesis of trehalose and in the production of glycogen and alpha-glucan via the TreS-Pep2 branch involved in the biosynthesis of maltose-1-phosphate (M1P). Catalyzes the transfer of glucose from UDP-glucose (UDP-Glc) to D-glucose 6-phosphate (Glc-6-P) to form trehalose-6-phosphate. Probably also able to use ADP-Glc, CDP-Glc, GDP-Glc and TDP-Glc as glucosyl donors. The chain is Trehalose-6-phosphate synthase from Mycobacterium tuberculosis (strain CDC 1551 / Oshkosh).